The primary structure comprises 154 residues: Myoglobin (154 aa).

The Globin domain occupies 2 to 148 (GLSDGEWQLV…FRNDIAAKYK (147 aa)). The residue at position 4 (S4) is a Phosphoserine. A nitrite-binding site is contributed by H65. H65 provides a ligand contact to O2. T68 carries the phosphothreonine modification. Residue H94 participates in heme b binding.

The protein belongs to the globin family. In terms of assembly, monomeric.

The protein localises to the cytoplasm. It is found in the sarcoplasm. The enzyme catalyses Fe(III)-heme b-[protein] + nitric oxide + H2O = Fe(II)-heme b-[protein] + nitrite + 2 H(+). It carries out the reaction H2O2 + AH2 = A + 2 H2O. In terms of biological role, monomeric heme protein which primary function is to store oxygen and facilitate its diffusion within muscle tissues. Reversibly binds oxygen through a pentacoordinated heme iron and enables its timely and efficient release as needed during periods of heightened demand. Depending on the oxidative conditions of tissues and cells, and in addition to its ability to bind oxygen, it also has a nitrite reductase activity whereby it regulates the production of bioactive nitric oxide. Under stress conditions, like hypoxia and anoxia, it also protects cells against reactive oxygen species thanks to its pseudoperoxidase activity. The polypeptide is Myoglobin (MB) (Otolemur crassicaudatus (Brown greater galago)).